A 138-amino-acid chain; its full sequence is Large ribosomal subunit protein uL16 (138 aa).

The segment covering 1–17 (MLIPRKVKHRKQHHPRQ) has biased composition (basic residues). Residues 1 to 24 (MLIPRKVKHRKQHHPRQRGIASGG) are disordered.

Belongs to the universal ribosomal protein uL16 family. Part of the 50S ribosomal subunit.

Its function is as follows. Binds 23S rRNA and is also seen to make contacts with the A and possibly P site tRNAs. The protein is Large ribosomal subunit protein uL16 of Mycolicibacterium gilvum (strain PYR-GCK) (Mycobacterium gilvum (strain PYR-GCK)).